Here is a 568-residue protein sequence, read N- to C-terminus: O-fucosyltransferase 9 (568 aa).

The span at 1 to 19 shows a compositional bias: low complexity; that stretch reads MHGLSRLGNGSSNGRINIP. Positions 1–33 are disordered; sequence MHGLSRLGNGSSNGRINIPSPSPPSSPRIRHTR. The chain crosses the membrane as a helical; Signal-anchor for type II membrane protein span at residues 65-85; sequence LLLAPLLYIAGMLLFMGSFGF. N-linked (GlcNAc...) asparagine glycans are attached at residues N125, N151, N189, and N243. 336 to 338 contributes to the substrate binding site; the sequence is HLR. N408 and N409 each carry an N-linked (GlcNAc...) asparagine glycan.

This sequence belongs to the glycosyltransferase GT106 family.

The protein localises to the membrane. The protein operates within glycan metabolism. This Arabidopsis thaliana (Mouse-ear cress) protein is O-fucosyltransferase 9.